The sequence spans 147 residues: Small ribosomal subunit protein bS6 (147 aa).

The tract at residues 107-147 (KEGRERKARPARAERRDDTEAEDLSDEEGVEAEDFEEEQGV) is disordered. The span at 125–147 (TEAEDLSDEEGVEAEDFEEEQGV) shows a compositional bias: acidic residues.

The protein belongs to the bacterial ribosomal protein bS6 family.

In terms of biological role, binds together with bS18 to 16S ribosomal RNA. This chain is Small ribosomal subunit protein bS6, found in Cellvibrio japonicus (strain Ueda107) (Pseudomonas fluorescens subsp. cellulosa).